The primary structure comprises 295 residues: Taste receptor type 2 member 120 (295 aa).

The Extracellular portion of the chain corresponds to 1–5 (MDLTE). Residues 6-26 (WIVTIIMMIEFLLGNCANFFI) form a helical membrane-spanning segment. The Cytoplasmic segment spans residues 27–45 (MVVNAIDCMKRRKISSADR). Residues 46 to 66 (IITALAISRIGLLWAMLMNWH) form a helical membrane-spanning segment. Residues 67–83 (SRVYTTDTYSFQVTAFS) are Extracellular-facing. Residues 84-104 (GIIWAITNHFTTWLGTILSMF) form a helical membrane-spanning segment. The Cytoplasmic segment spans residues 105 to 125 (YLFKIANFSNCLFLHLKRKLD). A helical transmembrane segment spans residues 126–146 (SVLLVIFLVSSLLVFAYLGVV). At 147-177 (NIKKIAWLSVHEGNVTVKSKLMNIASIRDTL) the chain is on the extracellular side. N-linked (GlcNAc...) asparagine glycosylation occurs at Asn160. A helical transmembrane segment spans residues 178-198 (LFSLINIAPFGISLTCVLLLI). The Cytoplasmic segment spans residues 199–230 (YSLGKHLKNMKFYGKGCQDQSTMVHIRALQTV). A helical membrane pass occupies residues 231 to 251 (VSFLLLYATYSSCVIISGWSI). Over 252–255 (QNVP) the chain is Extracellular. Residues 256 to 276 (IFLFCVTIGAFYPAGHSCILI) form a helical membrane-spanning segment. The Cytoplasmic segment spans residues 277–295 (WGNQKLKQFLLLFLRQMKC).

The protein belongs to the G-protein coupled receptor T2R family.

It localises to the membrane. Functionally, putative taste receptor which may play a role in the perception of bitterness. This is Taste receptor type 2 member 120 from Rattus norvegicus (Rat).